Reading from the N-terminus, the 283-residue chain is Pantothenate synthetase (283 aa).

30-37 provides a ligand contact to ATP; sequence MGNLHAGH. The Proton donor role is filled by His37. Gln61 lines the (R)-pantoate pocket. Residue Gln61 coordinates beta-alanine. 149–152 contributes to the ATP binding site; it reads GQKD. Gln155 contributes to the (R)-pantoate binding site. ATP is bound by residues Val178 and 186-189; that span reads LSSR.

It belongs to the pantothenate synthetase family. Homodimer.

It is found in the cytoplasm. It catalyses the reaction (R)-pantoate + beta-alanine + ATP = (R)-pantothenate + AMP + diphosphate + H(+). The protein operates within cofactor biosynthesis; (R)-pantothenate biosynthesis; (R)-pantothenate from (R)-pantoate and beta-alanine: step 1/1. In terms of biological role, catalyzes the condensation of pantoate with beta-alanine in an ATP-dependent reaction via a pantoyl-adenylate intermediate. The protein is Pantothenate synthetase of Hydrogenovibrio crunogenus (strain DSM 25203 / XCL-2) (Thiomicrospira crunogena).